A 328-amino-acid chain; its full sequence is Beta-ketoacyl-[acyl-carrier-protein] synthase III (328 aa).

Active-site residues include Cys-114 and His-253. An ACP-binding region spans residues 254-258 (QANIR). Asn-283 is a catalytic residue.

It belongs to the thiolase-like superfamily. FabH family. As to quaternary structure, homodimer.

The protein localises to the cytoplasm. The catalysed reaction is malonyl-[ACP] + acetyl-CoA + H(+) = 3-oxobutanoyl-[ACP] + CO2 + CoA. The protein operates within lipid metabolism; fatty acid biosynthesis. Its function is as follows. Catalyzes the condensation reaction of fatty acid synthesis by the addition to an acyl acceptor of two carbons from malonyl-ACP. Catalyzes the first condensation reaction which initiates fatty acid synthesis and may therefore play a role in governing the total rate of fatty acid production. Possesses both acetoacetyl-ACP synthase and acetyl transacylase activities. Its substrate specificity determines the biosynthesis of branched-chain and/or straight-chain of fatty acids. In Clostridioides difficile (strain 630) (Peptoclostridium difficile), this protein is Beta-ketoacyl-[acyl-carrier-protein] synthase III.